The primary structure comprises 897 residues: Alanine--tRNA ligase (897 aa).

Residues His-581, His-585, Cys-684, and His-688 each coordinate Zn(2+).

It belongs to the class-II aminoacyl-tRNA synthetase family. Requires Zn(2+) as cofactor.

The protein localises to the cytoplasm. The enzyme catalyses tRNA(Ala) + L-alanine + ATP = L-alanyl-tRNA(Ala) + AMP + diphosphate. Functionally, catalyzes the attachment of alanine to tRNA(Ala) in a two-step reaction: alanine is first activated by ATP to form Ala-AMP and then transferred to the acceptor end of tRNA(Ala). Also edits incorrectly charged Ser-tRNA(Ala) and Gly-tRNA(Ala) via its editing domain. This is Alanine--tRNA ligase from Mycobacterium sp. (strain JLS).